A 431-amino-acid chain; its full sequence is Putative helicase 055L (431 aa).

The 150-residue stretch at 73-222 (WGHVTSKGYC…ALGAFFGRED (150 aa)) folds into the Helicase ATP-binding domain. 86–93 (CPPGFGKT) contacts ATP. The short motif at 175–178 (DEAH) is the DEAH box element. A disordered region spans residues 403–431 (KCDASRPSQSTPTPTGSSQPAPRTRRPQR). The span at 407-424 (SRPSQSTPTPTGSSQPAP) shows a compositional bias: low complexity.

The polypeptide is Putative helicase 055L (Frog virus 3 (isolate Goorha) (FV-3)).